Consider the following 244-residue polypeptide: Ribonuclease 3 (244 aa).

An RNase III domain is found at 5–136 (LAELERAIGI…LVGAIYLDQG (132 aa)). A Mg(2+)-binding site is contributed by E49. Residue D53 is part of the active site. Residues D122 and E125 each coordinate Mg(2+). The active site involves E125. In terms of domain architecture, DRBM spans 161-229 (DPTTRLQELM…ARKALAAWDK (69 aa)).

The protein belongs to the ribonuclease III family. In terms of assembly, homodimer. The cofactor is Mg(2+).

It is found in the cytoplasm. The catalysed reaction is Endonucleolytic cleavage to 5'-phosphomonoester.. Digests double-stranded RNA. Involved in the processing of primary rRNA transcript to yield the immediate precursors to the large and small rRNAs (23S and 16S). Processes some mRNAs, and tRNAs when they are encoded in the rRNA operon. Processes pre-crRNA and tracrRNA of type II CRISPR loci if present in the organism. The sequence is that of Ribonuclease 3 from Chloroflexus aurantiacus (strain ATCC 29364 / DSM 637 / Y-400-fl).